A 218-amino-acid polypeptide reads, in one-letter code: uncharacterized protein (218 aa).

It belongs to the HAD-like hydrolase superfamily.

The protein resides in the cytoplasm. The protein localises to the nucleus. This is an uncharacterized protein from Saccharomyces cerevisiae (strain ATCC 204508 / S288c) (Baker's yeast).